An 82-amino-acid polypeptide reads, in one-letter code: Chlorosome protein E (82 aa).

Position 26 (histidine 26) interacts with a bacteriochlorophyll c. The interval 55 to 82 (GSSGLKGSSPKYSGYATPSKEVKSRFEK) is disordered. The segment covering 59–69 (LKGSSPKYSGY) has biased composition (low complexity).

Belongs to the BChl C/E-binding protein family.

Its subcellular location is the chlorosome. The protein resides in the chlorosome envelope. Functionally, component of the photosynthetic apparatus. The light harvesting B740 complex binds bacteriochlorophyll c. This is Chlorosome protein E (csmE) from Chlorobaculum tepidum (strain ATCC 49652 / DSM 12025 / NBRC 103806 / TLS) (Chlorobium tepidum).